A 192-amino-acid polypeptide reads, in one-letter code: Fe/S biogenesis protein NfuA (192 aa).

2 residues coordinate [4Fe-4S] cluster: C149 and C152.

This sequence belongs to the NfuA family. As to quaternary structure, homodimer. The cofactor is [4Fe-4S] cluster.

Functionally, involved in iron-sulfur cluster biogenesis. Binds a 4Fe-4S cluster, can transfer this cluster to apoproteins, and thereby intervenes in the maturation of Fe/S proteins. Could also act as a scaffold/chaperone for damaged Fe/S proteins. This chain is Fe/S biogenesis protein NfuA, found in Aeromonas salmonicida (strain A449).